A 1187-amino-acid polypeptide reads, in one-letter code: ATP-dependent DNA helicase MPH1 (1187 aa).

The 168-residue stretch at 144-311 folds into the Helicase ATP-binding domain; that stretch reads IVERAFYDNL…QIIDNLNISK (168 aa). ATP is bound at residue 157 to 164; that stretch reads LPTGLGKT. The DEAH box signature appears at 259–262; sequence DEAH. The Helicase C-terminal domain occupies 486–681; it reads ELDDFFKNHE…FIQLRPQHRM (196 aa). Disordered stretches follow at residues 542–576, 781–848, and 941–1003; these read VENF…MTGM, DKLV…NNQV, and PEKP…LGVK. Residues 547-556 are compositionally biased toward basic residues; it reads KKKQKGQTKK. Polar residues predominate over residues 564 to 576; that stretch reads TRSSSENAQMTGM. A compositionally biased stretch (basic and acidic residues) spans 781 to 817; that stretch reads DKLVDSDSESEVDKENENVIQEVDKSKNQEQNDHIIT. Positions 822–848 are enriched in polar residues; sequence TEQSVAGNTKSTTNGTSYSEPENNNQV. Residues 967 to 977 are compositionally biased toward low complexity; that stretch reads SNSISIPSSTT. A compositionally biased stretch (basic and acidic residues) spans 980 to 989; that stretch reads SHNEVTRKVV.

This sequence belongs to the DEAD box helicase family. DEAH subfamily. FANCM sub-subfamily. As to quaternary structure, interacts with the MHF histone-fold complex to form the FANCM-MHF complex.

It localises to the nucleus. It carries out the reaction ATP + H2O = ADP + phosphate + H(+). Its function is as follows. ATP-dependent DNA helicase involved in DNA damage repair by homologous recombination and in genome maintenance. Capable of unwinding D-loops. Plays a role in limiting crossover recombinants during mitotic DNA double-strand break (DSB) repair. Component of a FANCM-MHF complex which promotes gene conversion at blocked replication forks, probably by reversal of the stalled fork. This is ATP-dependent DNA helicase MPH1 from Candida albicans (strain SC5314 / ATCC MYA-2876) (Yeast).